The following is a 278-amino-acid chain: Tryptophan synthase alpha chain (278 aa).

Catalysis depends on proton acceptor residues Glu49 and Asp60.

This sequence belongs to the TrpA family. Tetramer of two alpha and two beta chains.

The catalysed reaction is (1S,2R)-1-C-(indol-3-yl)glycerol 3-phosphate + L-serine = D-glyceraldehyde 3-phosphate + L-tryptophan + H2O. The protein operates within amino-acid biosynthesis; L-tryptophan biosynthesis; L-tryptophan from chorismate: step 5/5. The alpha subunit is responsible for the aldol cleavage of indoleglycerol phosphate to indole and glyceraldehyde 3-phosphate. This chain is Tryptophan synthase alpha chain, found in Granulibacter bethesdensis (strain ATCC BAA-1260 / CGDNIH1).